Here is a 74-residue protein sequence, read N- to C-terminus: uncharacterized protein (74 aa).

Residues 1 to 19 (MIGLIVVPILFAIKGIVVG) form the signal peptide. The tract at residues 26–74 (KFGKHSNTKDQKEDKDEDKRQSISQRKQHTEWPIEENRIQRRAPNQSAL) is disordered. Composition is skewed to basic and acidic residues over residues 32 to 46 (NTKDQKEDKDEDKRQ) and 53 to 64 (QHTEWPIEENRI).

This is an uncharacterized protein from Saccharomyces cerevisiae (strain ATCC 204508 / S288c) (Baker's yeast).